We begin with the raw amino-acid sequence, 55 residues long: Mitochondrial import receptor subunit TOM7 homolog (55 aa).

Topologically, residues 1-20 (MVKLSKEAKQRLQQLFKGGQ) are cytoplasmic. Residues 21-40 (FAIRWGFIPLVIYLGFTRGA) traverse the membrane as a helical segment. Over 41-55 (DPGMPEPSVLSLLWG) the chain is Mitochondrial intermembrane.

This sequence belongs to the Tom7 family. As to quaternary structure, forms part of the preprotein translocase complex of the outer mitochondrial membrane (TOM complex) which consists of at least 7 different proteins (TOMM5, TOMM6, TOMM7, TOMM20, TOMM22, TOMM40 and TOMM70).

The protein resides in the mitochondrion outer membrane. Its function is as follows. Required for assembly and stability of the TOM complex. Positive regulator of PRKN translocation to damaged mitochondria. Acts probably by stabilizing PINK1 on the outer membrane of depolarized mitochondria. The sequence is that of Mitochondrial import receptor subunit TOM7 homolog (Tomm7) from Mus musculus (Mouse).